Reading from the N-terminus, the 390-residue chain is Succinate--CoA ligase [ADP-forming] subunit beta (390 aa).

The ATP-grasp domain occupies 9 to 244; the sequence is KSLFQQYGIP…ISQEDVREAK (236 aa). The ATP site is built by Lys-46, Glu-99, Leu-102, and Glu-107. Mg(2+)-binding residues include Asn-199 and Asp-213. Residues Asn-264 and 321–323 contribute to the substrate site; that span reads GIV.

This sequence belongs to the succinate/malate CoA ligase beta subunit family. As to quaternary structure, heterotetramer of two alpha and two beta subunits. The cofactor is Mg(2+).

The catalysed reaction is succinate + ATP + CoA = succinyl-CoA + ADP + phosphate. It catalyses the reaction GTP + succinate + CoA = succinyl-CoA + GDP + phosphate. Its pathway is carbohydrate metabolism; tricarboxylic acid cycle; succinate from succinyl-CoA (ligase route): step 1/1. Its function is as follows. Succinyl-CoA synthetase functions in the citric acid cycle (TCA), coupling the hydrolysis of succinyl-CoA to the synthesis of either ATP or GTP and thus represents the only step of substrate-level phosphorylation in the TCA. The beta subunit provides nucleotide specificity of the enzyme and binds the substrate succinate, while the binding sites for coenzyme A and phosphate are found in the alpha subunit. This chain is Succinate--CoA ligase [ADP-forming] subunit beta, found in Hydrogenovibrio crunogenus (strain DSM 25203 / XCL-2) (Thiomicrospira crunogena).